Here is a 251-residue protein sequence, read N- to C-terminus: Probable transcriptional regulatory protein jk1057 (251 aa).

The interval 1–22 (MAGHSKWATTKHKKAANDAKRG) is disordered.

The protein belongs to the TACO1 family.

The protein localises to the cytoplasm. This chain is Probable transcriptional regulatory protein jk1057, found in Corynebacterium jeikeium (strain K411).